We begin with the raw amino-acid sequence, 281 residues long: Diaminopimelate epimerase (281 aa).

2 residues coordinate substrate: N13 and N66. Catalysis depends on C75, which acts as the Proton donor. Residues 76–77, N164, N197, and 215–216 contribute to the substrate site; these read GN and ER. The active-site Proton acceptor is C224. 225-226 contributes to the substrate binding site; the sequence is GT.

This sequence belongs to the diaminopimelate epimerase family. Homodimer.

The protein resides in the cytoplasm. The catalysed reaction is (2S,6S)-2,6-diaminopimelate = meso-2,6-diaminopimelate. The protein operates within amino-acid biosynthesis; L-lysine biosynthesis via DAP pathway; DL-2,6-diaminopimelate from LL-2,6-diaminopimelate: step 1/1. Catalyzes the stereoinversion of LL-2,6-diaminopimelate (L,L-DAP) to meso-diaminopimelate (meso-DAP), a precursor of L-lysine and an essential component of the bacterial peptidoglycan. The polypeptide is Diaminopimelate epimerase (Rippkaea orientalis (strain PCC 8801 / RF-1) (Cyanothece sp. (strain PCC 8801))).